The sequence spans 1469 residues: Protein BCL9 homolog (1469 aa).

The segment covering 1–16 (MLSTTMPRSPTQQQPQ) has biased composition (polar residues). 5 disordered regions span residues 1–131 (MLST…NVSA), 161–187 (SNKAKGQAAGGGCETGSTSSLTVKEEP), 200–222 (EERENHSPTMSPVGFGSIGNAQD), 422–442 (ENSKRSTVSAPSNSFVDQSDP), and 454–474 (GGSSNTSRSGQNSRNHVDSIS). Serine 9 is subject to Phosphoserine. Threonine 11 is subject to Phosphothreonine. Residues 17-34 (PNSDASSTSASGSNPGAA) are compositionally biased toward low complexity. Composition is skewed to polar residues over residues 40–60 (SAASRSSPKTLNSEPFSTLSP) and 90–113 (SGNNLPEGQTMLRQNSTSTINSCL). Residues 116–130 (SPQNSSEHSNSSNVS) show a composition bias toward low complexity. Serine 206 carries the post-translational modification Phosphoserine. Threonine 208 is subject to Phosphothreonine. A Phosphoserine modification is found at serine 210. Composition is skewed to polar residues over residues 422–438 (ENSKRSTVSAPSNSFVD) and 455–474 (GSSNTSRSGQNSRNHVDSIS). Positions 511 to 555 (SLQGVKVPDENLTPQQRQHREEQLAKIKKMNQFLFPENENSVGAN) are ARM-binding. 3 disordered regions span residues 728-830 (GGKP…TSTV), 844-913 (CFQA…RSPV), and 961-991 (QASAQGGSVQFSRRSDNIPLNPNSGNRPPPN). Low complexity predominate over residues 731-745 (PRQVTGTVVPQQQTP). Residues 770 to 781 (IQRSASVPIATQ) are compositionally biased toward polar residues. A compositionally biased stretch (low complexity) spans 782-796 (SPNPSSPNNLSLPSP). Polar residues-rich tracts occupy residues 806-830 (PTNSPSMDGTGSLSGSVPQANTSTV) and 844-880 (CFQADTPSPSNQNRSRNTGSSSVLTHNLSSNPSTPLS). A phosphoserine mark is found at serine 883, serine 905, and serine 911. A compositionally biased stretch (polar residues) spans 904 to 913 (PSPQGQRSPV).

It belongs to the BCL9 family. Binds to ARM and PYGO.

The protein localises to the nucleus. Functionally, involved in signal transduction through the Wnt pathway. In Drosophila melanogaster (Fruit fly), this protein is Protein BCL9 homolog (lgs).